We begin with the raw amino-acid sequence, 398 residues long: Phytoene synthase 2, chloroplastic (398 aa).

The N-terminal 80 residues, 1 to 80 (MASSSSAAAL…EEAVYEVVLR (80 aa)), are a transit peptide targeting the chloroplast.

This sequence belongs to the phytoene/squalene synthase family. As to expression, expressed in leaves and endosperm. Expressed in developing leaves.

Its subcellular location is the plastid. The protein resides in the chloroplast membrane. It is found in the chloroplast. It localises to the plastoglobule. The catalysed reaction is 2 (2E,6E,10E)-geranylgeranyl diphosphate = 15-cis-phytoene + 2 diphosphate. Functionally, catalyzes the conversion of geranylgeranyl diphosphate to phytoene. Mediates the first committed step in carotenoid biosynthesis. In Oryza sativa subsp. japonica (Rice), this protein is Phytoene synthase 2, chloroplastic.